Reading from the N-terminus, the 263-residue chain is 3-deoxy-manno-octulosonate cytidylyltransferase 1 (263 aa).

Belongs to the KdsB family.

The protein localises to the cytoplasm. It catalyses the reaction 3-deoxy-alpha-D-manno-oct-2-ulosonate + CTP = CMP-3-deoxy-beta-D-manno-octulosonate + diphosphate. It participates in nucleotide-sugar biosynthesis; CMP-3-deoxy-D-manno-octulosonate biosynthesis; CMP-3-deoxy-D-manno-octulosonate from 3-deoxy-D-manno-octulosonate and CTP: step 1/1. It functions in the pathway bacterial outer membrane biogenesis; lipopolysaccharide biosynthesis. Activates KDO (a required 8-carbon sugar) for incorporation into bacterial lipopolysaccharide in Gram-negative bacteria. This chain is 3-deoxy-manno-octulosonate cytidylyltransferase 1, found in Burkholderia ambifaria (strain ATCC BAA-244 / DSM 16087 / CCUG 44356 / LMG 19182 / AMMD) (Burkholderia cepacia (strain AMMD)).